The primary structure comprises 151 residues: ATP synthase subunit b' (151 aa).

A helical membrane pass occupies residues 18–38 (TLPLMALQVVLLTFILNALFF).

It belongs to the ATPase B chain family. F-type ATPases have 2 components, F(1) - the catalytic core - and F(0) - the membrane proton channel. F(1) has five subunits: alpha(3), beta(3), gamma(1), delta(1), epsilon(1). F(0) has four main subunits: a(1), b(1), b'(1) and c(10-14). The alpha and beta chains form an alternating ring which encloses part of the gamma chain. F(1) is attached to F(0) by a central stalk formed by the gamma and epsilon chains, while a peripheral stalk is formed by the delta, b and b' chains.

The protein localises to the cellular thylakoid membrane. In terms of biological role, f(1)F(0) ATP synthase produces ATP from ADP in the presence of a proton or sodium gradient. F-type ATPases consist of two structural domains, F(1) containing the extramembraneous catalytic core and F(0) containing the membrane proton channel, linked together by a central stalk and a peripheral stalk. During catalysis, ATP synthesis in the catalytic domain of F(1) is coupled via a rotary mechanism of the central stalk subunits to proton translocation. Component of the F(0) channel, it forms part of the peripheral stalk, linking F(1) to F(0). The b'-subunit is a diverged and duplicated form of b found in plants and photosynthetic bacteria. The protein is ATP synthase subunit b' of Prochlorococcus marinus (strain MIT 9303).